The primary structure comprises 229 residues: MIAIIPAFNEEKNILKVLKDLEKLRVDAVVVDDGSKDNTSKIVEEFAKKAKINVYLIRNEKNEGKAKAIEKGTKFALSLNKYKYIIYIDGDYQHKPMDIPKLLKKLEDTNADAVFGIRKYKHIPLHRQISNFFASILTSLAVLIYSKRFYFFRDVQCGFRIIKAEFLKDMKFGDGYAVEHFIALQLAKKGAKIVEEYVSVEYHDEAVSYITTKKILEVAKQVIKFIFLE.

This is an uncharacterized protein from Methanocaldococcus jannaschii (strain ATCC 43067 / DSM 2661 / JAL-1 / JCM 10045 / NBRC 100440) (Methanococcus jannaschii).